Here is a 485-residue protein sequence, read N- to C-terminus: Terminase, large subunit (485 aa).

ADP contacts are provided by residues K17 to Q22, Q40 to E45, and R79. Residues Q22–G197 are ATPase activity. 2 residues coordinate ATP: Q97 and Q99. Residues S125–S131 carry the Walker A motif motif. The Walker B motif motif lies at F145 to E150. The For ATPase activity role is filled by E150. The tract at residues S256 to Y438 is nuclease. Mg(2+) is bound by residues D294, D347, and D429.

It belongs to the Tequatrovirus large terminase family. As to quaternary structure, interacts with the terminase small subunit; the active complex is composed of a pentamer of terminase large subunits and a dodecamer of terminase small subunits. Interacts with the portal protein. Requires Mg(2+) as cofactor.

Its function is as follows. The terminase large subunit acts as an ATP driven molecular motor necessary for viral DNA translocation into empty capsids and as an endonuclease that cuts the viral genome to initiate and to end a packaging reaction The terminase lies at a unique vertex of the procapsid and is composed of two subunits, a small terminase subunit involved in viral DNA recognition (packaging sequence), and a large terminase subunit possessing endonucleolytic and ATPase activities. Both terminase subunits heterooligomerize and are docked on the portal protein to form the packaging machine. The terminase large subunit exhibits endonuclease activity and cleaves the viral genome concatemer. Once the capsid is packaged with the DNA, the terminase complex is substituted by the tail. This chain is Terminase, large subunit, found in Thermus thermophilus (Thermus thermophilus phage P23-45).